Consider the following 496-residue polypeptide: Cobyric acid synthase (496 aa).

A GATase cobBQ-type domain is found at 255–445 (DLEIAVLKLP…LHGLLDNGPW (191 aa)). The active-site Nucleophile is the cysteine 336. The active site involves histidine 437.

Belongs to the CobB/CobQ family. CobQ subfamily.

It functions in the pathway cofactor biosynthesis; adenosylcobalamin biosynthesis. In terms of biological role, catalyzes amidations at positions B, D, E, and G on adenosylcobyrinic A,C-diamide. NH(2) groups are provided by glutamine, and one molecule of ATP is hydrogenolyzed for each amidation. The chain is Cobyric acid synthase from Parasynechococcus marenigrum (strain WH8102).